The following is a 318-amino-acid chain: Ubiquitin-like domain-containing CTD phosphatase 1 (318 aa).

The 79-residue stretch at 3–81 (LSLIIKWGGQ…IMMMGTREES (79 aa)) folds into the Ubiquitin-like domain. The FCP1 homology domain occupies 133 to 294 (PREGKKLLVL…LKLSQYLKEI (162 aa)). 3 residues coordinate Mg(2+): Asp-143, Asp-145, and Asp-253.

Mg(2+) is required as a cofactor.

The protein resides in the nucleus. It catalyses the reaction O-phospho-L-seryl-[protein] + H2O = L-seryl-[protein] + phosphate. It carries out the reaction O-phospho-L-threonyl-[protein] + H2O = L-threonyl-[protein] + phosphate. Dephosphorylates 26S nuclear proteasomes, thereby decreasing their proteolytic activity. Recruited to the 19S regulatory particle of the 26S proteasome where it dephosphorylates 19S component psmc2 which impairs psmc2 ATPase activity and disrupts 26S proteasome assembly. Has also been reported to stimulate the proteolytic activity of the 26S proteasome. This chain is Ubiquitin-like domain-containing CTD phosphatase 1 (ublcp1), found in Xenopus tropicalis (Western clawed frog).